A 156-amino-acid chain; its full sequence is Small ribosomal subunit protein uS7 (156 aa).

Belongs to the universal ribosomal protein uS7 family. In terms of assembly, part of the 30S ribosomal subunit. Contacts proteins S9 and S11.

Functionally, one of the primary rRNA binding proteins, it binds directly to 16S rRNA where it nucleates assembly of the head domain of the 30S subunit. Is located at the subunit interface close to the decoding center, probably blocks exit of the E-site tRNA. The sequence is that of Small ribosomal subunit protein uS7 from Nocardioides sp. (strain ATCC BAA-499 / JS614).